We begin with the raw amino-acid sequence, 710 residues long: Lactotransferrin (710 aa).

An N-terminal signal peptide occupies residues 1-19; the sequence is MKLVFLVLLFLGALGLCLA. F10 bears the Phosphoserine; alternate mark. A glycan (O-linked (GlcNAc) serine; alternate) is linked at F10. The interval 20–24 is critical for glycosaminoglycan, lipid A, lysozyme and DNA binding; sequence GRRRS. Bactericidal and antifungal activity stretches follow at residues 20–29 and 39–49; these read GRRRSVQWCA and FQWQRNMRKVR. The segment at 21 to 22 is important for full bactericidal and antifungal activities; that stretch reads RR. Transferrin-like domains lie at 25 to 352 and 364 to 695; these read VQWC…NLRK and VVWC…NLKK. Intrachain disulfides connect C28/C64 and C38/C55. Interaction with PspA stretches follow at residues 39 to 46 and 57 to 58; these read FQWQRNMR and KR. The interaction with lipopolysaccharide stretch occupies residues 39–49; the sequence is FQWQRNMRKVR. The involved in glycosaminoglycan binding stretch occupies residues 46–51; that stretch reads RKVRGP. Position 79 (D79) interacts with Fe(3+). K92 is an active-site residue. Y111 is a binding site for Fe(3+). Cystine bridges form between C134–C217, C176–C192, C189–C200, and C250–C264. Positions 136, 140, 142, and 143 each coordinate hydrogencarbonate. N156 carries N-linked (GlcNAc...) asparagine glycosylation. Y211 contributes to the Fe(3+) binding site. Position 272 (H272) interacts with Fe(3+). S278 functions as the Nucleophile in the catalytic mechanism. Disulfide bonds link C367-C399 and C377-C390. Glycyl lysine isopeptide (Lys-Gly) (interchain with G-Cter in ubiquitin) cross-links involve residues Q379 and S391. Fe(3+) is bound by residues D414 and Y454. 8 disulfides stabilise this stretch: C424/C705, C446/C668, C478/C553, C502/C696, C512/C526, C523/C536, C594/C608, and C646/C651. Hydrogencarbonate contacts are provided by T480, R484, A486, and G487. Residue N497 is glycosylated (N-linked (GlcNAc...) asparagine). Y547 provides a ligand contact to Fe(3+). Fe(3+) is bound at residue H616. A glycan (N-linked (GlcNAc...) asparagine) is linked at N642.

It belongs to the transferrin family. As to quaternary structure, monomer. Found in a complex with LTF, CLU, EPPIN and SEMG1. Found in a complex with MPO and LTF; interacts directly with CP, allows Fe(3+) incorporation into LTF and activation of CP ferroxidase activity. Phosphorylation at Ser-10 activates the transcriptional activity. Phosphorylation at Ser-10 also promotes proteasomal degradation. Alternatively can undergo O-GlcNAcylation at Ser-10. Post-translationally, O-GlcNAcylation at Ser-10 inhibits DNA binding and negatively regulates the transcriptional activity. Alternatively can undergo phosphorylation at Ser-10. In terms of processing, poly-N-acetyllactosaminic carbohydrate moiety seems to be needed for TLR4 activation. In terms of tissue distribution, high levels are found in saliva and tears, intermediate levels in serum and plasma, and low levels in urine. In kidney, detected in the distal collecting tubules in the medulla but not in the cortical region or in blood vessels. Detected in peripheral blood neutrophils (at protein level). Isoform 1 and isoform DeltaLf are expressed in breast, prostate, spleen, pancreas, kidney, small intestine, lung, skeletal muscle, uterus, thymus and fetal liver. Isoform 1 is expressed in brain, testis and peripheral blood leukocytes; isoform DeltaLf is barely detectable in these tissues. Isoform DeltaLf is expressed in placenta, liver and ovary; isoform 1 is barely detectable in these tissues. In kidney, isoform 1 is expressed at high levels in the collecting tubules of the medulla but at very low levels in the cortex.

The protein localises to the secreted. The protein resides in the cytoplasmic granule. Its subcellular location is the cytoplasm. It is found in the nucleus. Functionally, transferrins are iron binding transport proteins which can bind two Fe(3+) ions in association with the binding of an anion, usually bicarbonate. Its function is as follows. Major iron-binding and multifunctional protein found in exocrine fluids such as breast milk and mucosal secretions. Has antimicrobial activity, which depends on the extracellular cation concentration. Antimicrobial properties include bacteriostasis, which is related to its ability to sequester free iron and thus inhibit microbial growth, as well as direct bactericidal properties leading to the release of lipopolysaccharides from the bacterial outer membrane. Can also prevent bacterial biofilm development in P.aeruginosa infection. Has weak antifungal activity against C.albicans. Has anabolic, differentiating and anti-apoptotic effects on osteoblasts and can also inhibit osteoclastogenesis, possibly playing a role in the regulation of bone growth. Promotes binding of species C adenoviruses to epithelial cells, promoting adenovirus infection. Can inhibit papillomavirus infections. Stimulates the TLR4 signaling pathway leading to NF-kappa-B activation and subsequent pro-inflammatory cytokine production while also interfering with the lipopolysaccharide (LPS)-stimulated TLR4 signaling. Inhibits neutrophil granulocyte migration to sites of apoptosis, when secreted by apoptotic cells. Stimulates VEGFA-mediated endothelial cell migration and proliferation. Binds heparin, chondroitin sulfate and possibly other glycosaminoglycans (GAGs). Also binds specifically to pneumococcal surface protein A (PspA), the lipid A portion of bacterial lipopolysaccharide (LPS), lysozyme and DNA. In terms of biological role, lactoferricin binds to the bacterial surface and is crucial for the bactericidal functions. Has some antiviral activity against papillomavirus infection. N-terminal region shows strong antifungal activity against C.albicans. Contains two BBXB heparin-binding consensus sequences that appear to form the predominate functional GAG-binding site. Has antimicrobial activity and is able to permeabilize different ions through liposomal membranes. Functionally, has opioid antagonist activity. Shows preference for mu-receptor. Its function is as follows. Has opioid antagonist activity. Shows higher degrees of preference for kappa-receptors than for mu-receptors. In terms of biological role, the lactotransferrin transferrin-like domain 1 functions as a serine protease of the peptidase S60 family that cuts arginine rich regions. This function contributes to the antimicrobial activity. Shows a preferential cleavage at -Arg-Ser-Arg-Arg-|- and -Arg-Arg-Ser-Arg-|-, and of Z-Phe-Arg-|-aminomethylcoumarin sites. Transcription factor with antiproliferative properties and ability to induce cell cycle arrest. Binds to the DeltaLf response element found in the SKP1, BAX, DCPS, and SELENOH promoters. This Homo sapiens (Human) protein is Lactotransferrin.